A 504-amino-acid chain; its full sequence is Kinesin light chain 3 (504 aa).

Residues 90–150 (ALSAHVGALE…EEEKRHLEFL (61 aa)) adopt a coiled-coil conformation. A disordered region spans residues 153–197 (LRQYDPPAESQQSESPPRRDSLASLFPSEEEERKGPEAAGAAAAQ). A compositionally biased stretch (low complexity) spans 158-167 (PPAESQQSES). Ser-173 carries the phosphoserine modification. 5 TPR repeats span residues 207-240 (LRTLHNLVIQYAGQGRYEVAVPLCRQALEDLERS), 249-282 (ATMLNILALVYRDQNKYKEATDLLHDALQIREQT), 291-324 (AATLNNLAVLYGKRGRYREAEPLCQRALEIREKV), 333-366 (AKQLNNLALLCQNQGKFEDVERHYARALSIYEAL), and 375-408 (AKTKNNLASAYLKQNKYQQAEELYKEILHKEDLP). The disordered stretch occupies residues 411 to 438 (LGAPNTGTAGDAEQALRRSSSLSKIRES). The residue at position 466 (Ser-466) is a Phosphoserine. Thr-498 carries the post-translational modification Phosphothreonine. Ser-502 carries the post-translational modification Phosphoserine.

Belongs to the kinesin light chain family. As to quaternary structure, oligomer composed of two heavy chains and two light chains. Associates with microtubulin in an ATP-dependent manner. Interacts with KIF5C. Interacts with ODF1. Interacts with LRGUK. Interacts with VDAC2.

The protein resides in the cytoplasm. It is found in the cytoskeleton. It localises to the mitochondrion. In terms of biological role, kinesin is a microtubule-associated force-producing protein that may play a role in organelle transport. Plays a role during spermiogenesis in the development of the sperm tail midpiece and in the normal function of spermatozoa. May play a role in the formation of the mitochondrial sheath formation in the developing spermatid midpiece. The chain is Kinesin light chain 3 (KLC3) from Pongo abelii (Sumatran orangutan).